Reading from the N-terminus, the 477-residue chain is UDP-N-acetylmuramate--L-alanine ligase (477 aa).

122–128 (GTHGKTT) contributes to the ATP binding site.

It belongs to the MurCDEF family.

It is found in the cytoplasm. It catalyses the reaction UDP-N-acetyl-alpha-D-muramate + L-alanine + ATP = UDP-N-acetyl-alpha-D-muramoyl-L-alanine + ADP + phosphate + H(+). Its pathway is cell wall biogenesis; peptidoglycan biosynthesis. Functionally, cell wall formation. The protein is UDP-N-acetylmuramate--L-alanine ligase of Xylella fastidiosa (strain M12).